The primary structure comprises 379 residues: Succinyl-diaminopimelate desuccinylase (379 aa).

Position 68 (histidine 68) interacts with Zn(2+). The active site involves aspartate 70. Zn(2+) is bound at residue aspartate 101. The Proton acceptor role is filled by glutamate 135. Zn(2+)-binding residues include glutamate 136, glutamate 164, and histidine 350.

Belongs to the peptidase M20A family. DapE subfamily. Homodimer. It depends on Zn(2+) as a cofactor. The cofactor is Co(2+).

It catalyses the reaction N-succinyl-(2S,6S)-2,6-diaminopimelate + H2O = (2S,6S)-2,6-diaminopimelate + succinate. It functions in the pathway amino-acid biosynthesis; L-lysine biosynthesis via DAP pathway; LL-2,6-diaminopimelate from (S)-tetrahydrodipicolinate (succinylase route): step 3/3. In terms of biological role, catalyzes the hydrolysis of N-succinyl-L,L-diaminopimelic acid (SDAP), forming succinate and LL-2,6-diaminopimelate (DAP), an intermediate involved in the bacterial biosynthesis of lysine and meso-diaminopimelic acid, an essential component of bacterial cell walls. The polypeptide is Succinyl-diaminopimelate desuccinylase (Bordetella pertussis (strain Tohama I / ATCC BAA-589 / NCTC 13251)).